Consider the following 179-residue polypeptide: Shikimate kinase (179 aa).

Residue 22–27 (GTGKSS) participates in ATP binding. Ser-26 provides a ligand contact to Mg(2+). Substrate-binding residues include Asp-44, Arg-68, and Gly-90. Residue Arg-128 participates in ATP binding. Arg-147 is a binding site for substrate.

Belongs to the shikimate kinase family. Monomer. It depends on Mg(2+) as a cofactor.

It localises to the cytoplasm. The enzyme catalyses shikimate + ATP = 3-phosphoshikimate + ADP + H(+). Its pathway is metabolic intermediate biosynthesis; chorismate biosynthesis; chorismate from D-erythrose 4-phosphate and phosphoenolpyruvate: step 5/7. Functionally, catalyzes the specific phosphorylation of the 3-hydroxyl group of shikimic acid using ATP as a cosubstrate. In Geobacter metallireducens (strain ATCC 53774 / DSM 7210 / GS-15), this protein is Shikimate kinase.